We begin with the raw amino-acid sequence, 154 residues long: Protein AE7-like 1 (154 aa).

This sequence belongs to the MIP18 family.

Functionally, may play a role in chromosome segregation through establishment of sister chromatid cohesion. Unable to complement ae7 mutants, and thus probably not involved in the cytosolic iron-sulfur assembly (CIA) pathway. This chain is Protein AE7-like 1, found in Arabidopsis thaliana (Mouse-ear cress).